The sequence spans 829 residues: G-type lectin S-receptor-like serine/threonine-protein kinase At1g34300 (829 aa).

Residues 1 to 25 form the signal peptide; sequence MAVKTPFLKLLPLLLLLLHFPFSFS. 2 Bulb-type lectin domains span residues 26 to 140 and 143 to 260; these read TIPL…SSFD and TDTI…PVNA. Residues 26-421 are Extracellular-facing; sequence TIPLGSVIYA…KGDDNNSKVH (396 aa). N-linked (GlcNAc...) asparagine glycans are attached at residues asparagine 46, asparagine 98, asparagine 130, asparagine 151, asparagine 172, asparagine 178, asparagine 189, and asparagine 195. The 38-residue stretch at 264–301 folds into the EGF-like domain; that stretch reads AVDQCLVYGYCGNFGICSYNDTNPICSCPSRNFDFVDV. Cystine bridges form between cysteine 268-cysteine 280, cysteine 274-cysteine 289, cysteine 317-cysteine 399, cysteine 350-cysteine 373, and cysteine 354-cysteine 360. Asparagine 283 and asparagine 320 each carry an N-linked (GlcNAc...) asparagine glycan. Residues 317–399 form the Apple domain; the sequence is CSGNTTMLDL…VPSTSYVKVC (83 aa). Asparagine 416 carries an N-linked (GlcNAc...) asparagine glycan. A helical membrane pass occupies residues 422–442; the sequence is LWIVAVAVIAGLLGLVAVEIG. The Cytoplasmic segment spans residues 443 to 829; sequence LWWCCCRKNP…RISEGSMLGS (387 aa). Residues 484–759 form the Protein kinase domain; the sequence is KSFKEKLGAG…GKVVQMLEGI (276 aa). ATP contacts are provided by residues 490 to 498 and lysine 512; that span reads LGAGGFGTV. The residue at position 532 (serine 532) is a Phosphoserine. A caM-binding region spans residues 572 to 589; that stretch reads DSAKFLTWEYRFNIALGT. Residue aspartate 608 is the Proton acceptor of the active site. Phosphoserine is present on residues serine 625 and serine 799.

The protein belongs to the protein kinase superfamily. Ser/Thr protein kinase family.

The protein localises to the cell membrane. The enzyme catalyses L-seryl-[protein] + ATP = O-phospho-L-seryl-[protein] + ADP + H(+). It catalyses the reaction L-threonyl-[protein] + ATP = O-phospho-L-threonyl-[protein] + ADP + H(+). The polypeptide is G-type lectin S-receptor-like serine/threonine-protein kinase At1g34300 (Arabidopsis thaliana (Mouse-ear cress)).